The following is an 802-amino-acid chain: Leucine--tRNA ligase (802 aa).

The short motif at 40–51 (PYPSGAGLHVGH) is the 'HIGH' region element. The short motif at 576-580 (KMSKS) is the 'KMSKS' region element. Lysine 579 is a binding site for ATP.

Belongs to the class-I aminoacyl-tRNA synthetase family.

The protein resides in the cytoplasm. It carries out the reaction tRNA(Leu) + L-leucine + ATP = L-leucyl-tRNA(Leu) + AMP + diphosphate. This Bacillus mycoides (strain KBAB4) (Bacillus weihenstephanensis) protein is Leucine--tRNA ligase.